A 79-amino-acid polypeptide reads, in one-letter code: Sec-independent protein translocase protein TatA (79 aa).

The helical transmembrane segment at 1 to 21 (MGGISIWQLLIILVIVVLLFG) threads the bilayer. The segment at 45-79 (EEEKDADFEQKKQVEEKSAAEPVSTETQSDVKEKS) is disordered. The span at 51–63 (DFEQKKQVEEKSA) shows a compositional bias: basic and acidic residues.

It belongs to the TatA/E family. In terms of assembly, the Tat system comprises two distinct complexes: a TatABC complex, containing multiple copies of TatA, TatB and TatC subunits, and a separate TatA complex, containing only TatA subunits. Substrates initially bind to the TatABC complex, which probably triggers association of the separate TatA complex to form the active translocon.

The protein resides in the cell inner membrane. Part of the twin-arginine translocation (Tat) system that transports large folded proteins containing a characteristic twin-arginine motif in their signal peptide across membranes. TatA could form the protein-conducting channel of the Tat system. The sequence is that of Sec-independent protein translocase protein TatA from Alteromonas mediterranea (strain DSM 17117 / CIP 110805 / LMG 28347 / Deep ecotype).